A 300-amino-acid polypeptide reads, in one-letter code: Merozoite surface protein 2 (300 aa).

Residues 1 to 20 (MKVIKTLSIINFFIFVTFNI) form the signal peptide. N-linked (GlcNAc...) asparagine glycosylation is found at asparagine 22 and asparagine 36. The polymorphic region stretch occupies residues 44-226 (EESKPPTGAV…EQTESPELQS (183 aa)). The stretch at 51–58 (GAVAGSGA) is one 1; inverted repeat. Residues 51 to 74 (GAVAGSGAGAGSGAGAVAGSGAGA) are 7 X 8 AA tandem repeats of G-S-G-A-G-A-V-A. 5 consecutive repeat copies span residues 61-68 (GSGAGAVA), 69-76 (GSGAGAVA), 77-84 (GSGAGAVA), 85-92 (GSGAGAVA), and 93-100 (GSGAGAVA). Residues 103–110 (GAVAGSGA) form a 7; inverted repeat. The segment at 111–261 (GNGANPGADA…DSQKECTDGN (151 aa)) is disordered. The span at 124-148 (PSTPATTTTTTTTNDAEASTSTSSE) shows a compositional bias: low complexity. Residues 149 to 165 (NRNHNNAETNPKGKGEV) are compositionally biased toward basic and acidic residues. Polar residues-rich tracts occupy residues 167 to 193 (KPNQ…NVPR) and 200 to 228 (KSPT…QSAP). Asparagine 177 is a glycosylation site (N-linked (GlcNAc...) asparagine). Residue asparagine 249 is glycosylated (N-linked (GlcNAc...) asparagine). Cysteine 257 and cysteine 265 are disulfide-bonded. Asparagine 273 and asparagine 274 each carry an N-linked (GlcNAc...) asparagine glycan. Asparagine 274 is lipidated: GPI-anchor amidated asparagine. Positions 275–300 (SSNIASINKFVVLISATLVLSFAIFI) are cleaved as a propeptide — removed in mature form.

The protein localises to the cell membrane. May play a role in the merozoite attachment to the erythrocyte. The chain is Merozoite surface protein 2 from Plasmodium falciparum (isolate mad71 / Papua New Guinea).